Consider the following 108-residue polypeptide: Ig kappa chain V-V region HP 123E6 (108 aa).

The framework-1 stretch occupies residues 1-23 (DIQMTQSTSSLSASLGDRVTISC). Cysteine 23 and cysteine 88 are joined by a disulfide. Residues 24 to 34 (RASQDISNYLN) form a complementarity-determining-1 region. The tract at residues 35 to 49 (WYQQKPDGTVKLLIY) is framework-2. The tract at residues 50–56 (YTSRLHS) is complementarity-determining-2. A framework-3 region spans residues 57–88 (GVPSRFSGSGSGTDYSLTISNLEQEDIATYFC). The tract at residues 89 to 97 (QQGYMLPRT) is complementarity-determining-3. The framework-4 stretch occupies residues 98–108 (FGGGTKLEIKR).

The polypeptide is Ig kappa chain V-V region HP 123E6 (Mus musculus (Mouse)).